The sequence spans 362 residues: Poly(rC)-binding protein 2 (362 aa).

KH domains are found at residues 13–75 (TLTI…FAMI) and 97–162 (PVTL…VKQI). A Glycyl lysine isopeptide (Lys-Gly) (interchain with G-Cter in SUMO2) cross-link involves residue K115. S169 bears the Phosphoserine mark. K181 is covalently cross-linked (Glycyl lysine isopeptide (Lys-Gly) (interchain with G-Cter in SUMO2)). 2 positions are modified to phosphoserine: S185 and S268. Positions 284–348 (TTSHELTIPN…ASISLAQYLI (65 aa)) constitute a KH 3 domain. Residue K319 forms a Glycyl lysine isopeptide (Lys-Gly) (interchain with G-Cter in SUMO2) linkage. 2 positions are modified to phosphoserine: S361 and S362.

Identified in a mRNP complex, at least composed of DHX9, DDX3X, ELAVL1, HNRNPU, IGF2BP1, ILF3, PABPC1, PCBP2, PTBP2, STAU1, STAU2, SYNCRIP and YBX1. Interacts with IFIH1 and RNF135. Interacts with MAVS (via C-terminus) and ITCH (via WW domains). Interacts with CGAS; preventing the formation of liquid-like droplets in which CGAS is activated. Phosphorylated. The non-phosphorylated form(s) exhibited the strongest poly(rC)-binding activity.

The protein localises to the nucleus. It localises to the cytoplasm. Functionally, single-stranded nucleic acid binding protein that binds preferentially to oligo dC. Major cellular poly(rC)-binding protein. Also binds poly(rU). Acts as a negative regulator of antiviral signaling. Negatively regulates cellular antiviral responses mediated by MAVS signaling. It acts as an adapter between MAVS and the E3 ubiquitin ligase ITCH, therefore triggering MAVS ubiquitination and degradation. Negativeley regulates the cGAS-STING pathway via interaction with CGAS, preventing the formation of liquid-like droplets in which CGAS is activated. Together with PCBP1, required for erythropoiesis, possibly by regulating mRNA splicing. In Mus musculus (Mouse), this protein is Poly(rC)-binding protein 2 (Pcbp2).